The chain runs to 176 residues: Cytochrome b (176 aa).

Transmembrane regions (helical) follow at residues 33 to 53 (FGSL…FLAM), 77 to 98 (WMLR…YLHV), and 113 to 133 (WNVG…GYVL). Residues His-83 and His-97 each coordinate heme b.

Belongs to the cytochrome b family. The cytochrome bc1 complex contains 11 subunits: 3 respiratory subunits (MT-CYB, CYC1 and UQCRFS1), 2 core proteins (UQCRC1 and UQCRC2) and 6 low-molecular weight proteins (UQCRH/QCR6, UQCRB/QCR7, UQCRQ/QCR8, UQCR10/QCR9, UQCR11/QCR10 and a cleavage product of UQCRFS1). This cytochrome bc1 complex then forms a dimer. Heme b serves as cofactor.

It localises to the mitochondrion inner membrane. Component of the ubiquinol-cytochrome c reductase complex (complex III or cytochrome b-c1 complex) that is part of the mitochondrial respiratory chain. The b-c1 complex mediates electron transfer from ubiquinol to cytochrome c. Contributes to the generation of a proton gradient across the mitochondrial membrane that is then used for ATP synthesis. The chain is Cytochrome b (MT-CYB) from Idionycteris phyllotis (Allen's big-eared bat).